A 183-amino-acid polypeptide reads, in one-letter code: Large ribosomal subunit protein bL25 (183 aa).

It belongs to the bacterial ribosomal protein bL25 family. CTC subfamily. Part of the 50S ribosomal subunit; part of the 5S rRNA/L5/L18/L25 subcomplex. Contacts the 5S rRNA. Binds to the 5S rRNA independently of L5 and L18.

In terms of biological role, this is one of the proteins that binds to the 5S RNA in the ribosome where it forms part of the central protuberance. The polypeptide is Large ribosomal subunit protein bL25 (Desulfotalea psychrophila (strain LSv54 / DSM 12343)).